Consider the following 209-residue polypeptide: Uracil phosphoribosyltransferase (209 aa).

Residues Arg-79, Arg-104, and 131-139 (DPMLATGGS) contribute to the 5-phospho-alpha-D-ribose 1-diphosphate site. Uracil contacts are provided by residues Ile-194 and 199 to 201 (GDA). Asp-200 contributes to the 5-phospho-alpha-D-ribose 1-diphosphate binding site.

Belongs to the UPRTase family. Mg(2+) is required as a cofactor.

It catalyses the reaction UMP + diphosphate = 5-phospho-alpha-D-ribose 1-diphosphate + uracil. The protein operates within pyrimidine metabolism; UMP biosynthesis via salvage pathway; UMP from uracil: step 1/1. Allosterically activated by GTP. Functionally, catalyzes the conversion of uracil and 5-phospho-alpha-D-ribose 1-diphosphate (PRPP) to UMP and diphosphate. The protein is Uracil phosphoribosyltransferase of Streptococcus equi subsp. zooepidemicus (strain MGCS10565).